The primary structure comprises 192 residues: MPSLLLASSSSYRRELLTRLRLPFTCKSPDIDESHRLDETAHDLVRRLALEKARALAGEYPHHLIIGSDQVAVLNGQILGKPHTFERALEQLTAASGTSVTFLTGLALLNSSTGEHQVDCVPFTVHMRELDQASIERYLHAEQPYDCAGSFKAEGLGVSLFRSTEGSDATSLIGLPLIRLVDMLIKEGVSVP.

The Proton acceptor role is filled by D69.

This sequence belongs to the Maf family. YceF subfamily. Requires a divalent metal cation as cofactor.

Its subcellular location is the cytoplasm. The enzyme catalyses N(7)-methyl-GTP + H2O = N(7)-methyl-GMP + diphosphate + H(+). Its function is as follows. Nucleoside triphosphate pyrophosphatase that hydrolyzes 7-methyl-GTP (m(7)GTP). May have a dual role in cell division arrest and in preventing the incorporation of modified nucleotides into cellular nucleic acids. The polypeptide is 7-methyl-GTP pyrophosphatase (Pseudomonas savastanoi pv. phaseolicola (strain 1448A / Race 6) (Pseudomonas syringae pv. phaseolicola (strain 1448A / Race 6))).